Reading from the N-terminus, the 183-residue chain is Ribosome maturation factor RimP (183 aa).

The protein belongs to the RimP family.

It is found in the cytoplasm. In terms of biological role, required for maturation of 30S ribosomal subunits. The protein is Ribosome maturation factor RimP of Leptothrix cholodnii (strain ATCC 51168 / LMG 8142 / SP-6) (Leptothrix discophora (strain SP-6)).